The sequence spans 254 residues: Imidazole glycerol phosphate synthase subunit HisF (254 aa).

Active-site residues include Asp-12 and Asp-131.

Belongs to the HisA/HisF family. In terms of assembly, heterodimer of HisH and HisF.

It localises to the cytoplasm. The catalysed reaction is 5-[(5-phospho-1-deoxy-D-ribulos-1-ylimino)methylamino]-1-(5-phospho-beta-D-ribosyl)imidazole-4-carboxamide + L-glutamine = D-erythro-1-(imidazol-4-yl)glycerol 3-phosphate + 5-amino-1-(5-phospho-beta-D-ribosyl)imidazole-4-carboxamide + L-glutamate + H(+). It participates in amino-acid biosynthesis; L-histidine biosynthesis; L-histidine from 5-phospho-alpha-D-ribose 1-diphosphate: step 5/9. Functionally, IGPS catalyzes the conversion of PRFAR and glutamine to IGP, AICAR and glutamate. The HisF subunit catalyzes the cyclization activity that produces IGP and AICAR from PRFAR using the ammonia provided by the HisH subunit. This is Imidazole glycerol phosphate synthase subunit HisF from Frankia casuarinae (strain DSM 45818 / CECT 9043 / HFP020203 / CcI3).